The chain runs to 336 residues: Potassium channel subfamily K member 1 (336 aa).

Topologically, residues 1–20 (MLQSLAGSSCVRLVERHRSA) are cytoplasmic. Residues 21 to 41 (WCFGFLVLGYLLYLVFGAVVF) traverse the membrane as a helical segment. The Extracellular segment spans residues 42-103 (SSVELPYEDL…SNASGNWNWD (62 aa)). N-linked (GlcNAc...) asparagine glycosylation is present at Asn95. Positions 104 to 116 (FTSALFFASTVLS) form an intramembrane region, helical. The stretch at 117–122 (TTGYGH) is an intramembrane region. The interval 117–122 (TTGYGH) is selectivity filter 1. Residues 123–132 (TVPLSDGGKA) lie on the Extracellular side of the membrane. Residues 133-156 (FCIIYSVIGIPFTLLFLTAVVQRV) traverse the membrane as a helical segment. At 157-181 (TVHVTRRPVLYFHIRWGFSKQVVAI) the chain is on the cytoplasmic side. The helical transmembrane segment at 182–202 (VHAVLLGFVTVSCFFFIPAAV) threads the bilayer. The Extracellular segment spans residues 203 to 211 (FSVLEDDWN). Residues 212 to 224 (FLESFYFCFISLS) constitute an intramembrane region (helical). The segment at 225–230 (TIGLGD) is selectivity filter 2. An intramembrane segment occupies 225–231 (TIGLGDY). At 232-243 (VPGEGYNQKFRE) the chain is on the extracellular side. Residues 244-267 (LYKIGITCYLLLGLIAMLVVLETF) form a helical membrane-spanning segment. Topologically, residues 268-336 (CELHELKKFR…PPYEDGSADH (69 aa)) are cytoplasmic. Lys274 participates in a covalent cross-link: Glycyl lysine isopeptide (Lys-Gly) (interchain with G-Cter in SUMO). Residues 293–299 (IMEHDQL) are important for intracellular retention in recycling endosomes. Residues 310-336 (GLKEEQKQSEPFVASQSPPYEDGSADH) form a disordered region. Ser326 carries the phosphoserine modification.

It belongs to the two pore domain potassium channel (TC 1.A.1.8) family. In terms of assembly, homodimer; disulfide-linked. Heterodimer with KCNK2; disulfide-linked. In astrocytes, forms mostly heterodimeric potassium channels with KCNK2, with only a minor proportion of functional channels containing homodimeric KCNK1. Interacts with KCNK3 and KCNK9, forming functional heterodimeric channels. Interacts with GNG4. Identified in a complex with PSD and ARF6; interacts only with PSD that is bound to ARF6. Interacts with UBE2I. Sumoylation is controversial. Sumoylated by UBE2I. Not sumoylated when expressed in xenopus oocytes or mammalian cells. Sumoylation inactivates the channel, but does not interfere with expression at the cell membrane. Sumoylation of a single subunit is sufficient to silence the dimeric channel. Sumoylation of KCNK1 is sufficient to silence heterodimeric channels formed by KCNK1 and KCNK3 or KCNK9. Desumoylated by SENP1; this activates the channel. Desumoylated by SENP1; this strongly increases halothane-mediated activation of heterodimeric channels formed with KCNK9. SENP1 treatment has no effect. Detected in spiral ganglion neurons. Detected in hippocampus CA1 and CA1 regions and in the molecular layer of the dentate gyrus. Detected on hippocampus astrocytes. Highly expressed in the stria vascularis in the cochlea. Detected in pancreas islet beta cells. Detected in kidney, at brush border membranes in proximal tubules and in cytoplasmic structures in distal convoluted tubules, thick ascending limbs and collecting ducts (at protein level). Widely expressed. Detected in spiral ganglion cells. Highest expression in brain, kidney, thyroid, salivary gland, adrenal gland, prostate, epididymis, uterus, placenta, colon and jejunum. Moderate expression in eyes, pituitary, pancreas, smooth muscle, testis and ovary. Very low levels in lung, aorta, liver, heart, skeletal muscle, thymus and spleen. In the brain, highest expression in cerebellar granule cells, brainstem, hippocampus and cerebral cortex.

The protein resides in the cell membrane. It is found in the recycling endosome. Its subcellular location is the apical cell membrane. The protein localises to the cytoplasmic vesicle. It localises to the perikaryon. The protein resides in the cell projection. It is found in the dendrite. Its subcellular location is the synaptic cell membrane. The catalysed reaction is K(+)(in) = K(+)(out). The enzyme catalyses NH4(+)(in) = NH4(+)(out). It carries out the reaction Na(+)(in) = Na(+)(out). It catalyses the reaction Rb(+)(in) = Rb(+)(out). The catalysed reaction is Cs(+)(in) = Cs(+)(out). The enzyme catalyses Li(+)(in) = Li(+)(out). It carries out the reaction L-glutamate(out) = L-glutamate(in). It catalyses the reaction chloride(in) = chloride(out). Inhibited by quinine, quinidine, barium, and internal acidification. Functionally, ion channel that contributes to passive transmembrane potassium transport and to the regulation of the resting membrane potential in brain astrocytes, but also in kidney and in other tissues. Forms dimeric channels through which potassium ions pass in accordance with their electrochemical gradient. The channel is selective for K(+) ions at physiological potassium concentrations and at neutral pH, but becomes permeable to Na(+) at subphysiological K(+) levels and upon acidification of the extracellular medium. The homodimer has very low potassium channel activity, when expressed in heterologous systems, and can function as weakly inward rectifying potassium channel. Channel activity is modulated by activation of serotonin receptors. Heterodimeric channels containing KCNK1 and KCNK2 have much higher activity, and may represent the predominant form in astrocytes. Heterodimeric channels containing KCNK1 and KCNK3 or KCNK9 have much higher activity. Heterodimeric channels formed by KCNK1 and KCNK9 may contribute to halothane-sensitive currents. Mediates outward rectifying potassium currents in dentate gyrus granule cells and contributes to the regulation of their resting membrane potential. Contributes to the regulation of action potential firing in dentate gyrus granule cells and down-regulates their intrinsic excitability. In astrocytes, the heterodimer formed by KCNK1 and KCNK2 is required for rapid glutamate release in response to activation of G-protein coupled receptors, such as F2R and CNR1. Required for normal ion and water transport in the kidney. Contributes to the regulation of the resting membrane potential of pancreatic beta cells. The low channel activity of homodimeric KCNK1 may be due to sumoylation. The low channel activity may be due to rapid internalization from the cell membrane and retention in recycling endosomes. Permeable to monovalent cations with ion selectivity for K(+) &gt; Rb(+) &gt;&gt; NH4(+) &gt;&gt; Cs(+) = Na(+) = Li(+). In Mus musculus (Mouse), this protein is Potassium channel subfamily K member 1 (Kcnk1).